Reading from the N-terminus, the 680-residue chain is DNA-directed RNA polymerase subunit beta' (680 aa).

Zn(2+) contacts are provided by Cys69, Cys71, Cys87, and Cys90. Residues Asp489, Asp491, and Asp493 each coordinate Mg(2+).

Belongs to the RNA polymerase beta' chain family. RpoC1 subfamily. In terms of assembly, in plastids the minimal PEP RNA polymerase catalytic core is composed of four subunits: alpha, beta, beta', and beta''. When a (nuclear-encoded) sigma factor is associated with the core the holoenzyme is formed, which can initiate transcription. Mg(2+) is required as a cofactor. Requires Zn(2+) as cofactor.

Its subcellular location is the plastid. It localises to the chloroplast. It catalyses the reaction RNA(n) + a ribonucleoside 5'-triphosphate = RNA(n+1) + diphosphate. Functionally, DNA-dependent RNA polymerase catalyzes the transcription of DNA into RNA using the four ribonucleoside triphosphates as substrates. The protein is DNA-directed RNA polymerase subunit beta' of Nasturtium officinale (Watercress).